Reading from the N-terminus, the 197-residue chain is 3-isopropylmalate dehydratase small subunit (197 aa).

The protein belongs to the LeuD family. LeuD type 1 subfamily. Heterodimer of LeuC and LeuD.

The catalysed reaction is (2R,3S)-3-isopropylmalate = (2S)-2-isopropylmalate. It participates in amino-acid biosynthesis; L-leucine biosynthesis; L-leucine from 3-methyl-2-oxobutanoate: step 2/4. Catalyzes the isomerization between 2-isopropylmalate and 3-isopropylmalate, via the formation of 2-isopropylmaleate. This Corynebacterium glutamicum (strain R) protein is 3-isopropylmalate dehydratase small subunit.